Consider the following 480-residue polypeptide: DNA repair protein RadA (480 aa).

A C4-type zinc finger spans residues 10–27 (CSECRHVSAKWVGRCLEC). 95–102 (GDPGVGKS) serves as a coordination point for ATP. Residues 254-258 (KNRFG) carry the RadA KNRFG motif motif. Residues 353-480 (DIYLSTVGGM…TGHVPLGRGT (128 aa)) form a lon-protease-like region. Residues 459-480 (GTTLATPPSHSGTGHVPLGRGT) are disordered. Residues 461–470 (TLATPPSHSG) are compositionally biased toward polar residues.

Belongs to the RecA family. RadA subfamily.

In terms of biological role, DNA-dependent ATPase involved in processing of recombination intermediates, plays a role in repairing DNA breaks. Stimulates the branch migration of RecA-mediated strand transfer reactions, allowing the 3' invading strand to extend heteroduplex DNA faster. Binds ssDNA in the presence of ADP but not other nucleotides, has ATPase activity that is stimulated by ssDNA and various branched DNA structures, but inhibited by SSB. Does not have RecA's homology-searching function. This chain is DNA repair protein RadA, found in Mycobacterium tuberculosis (strain CDC 1551 / Oshkosh).